A 164-amino-acid chain; its full sequence is Phosphopantetheine adenylyltransferase (164 aa).

Residue S9 coordinates substrate. ATP contacts are provided by residues 9-10 (SF) and H17. K41, L73, and K87 together coordinate substrate. ATP contacts are provided by residues 88 to 90 (GLR), E98, and 123 to 129 (YSYLSSS).

It belongs to the bacterial CoaD family. As to quaternary structure, homohexamer. Requires Mg(2+) as cofactor.

The protein resides in the cytoplasm. It catalyses the reaction (R)-4'-phosphopantetheine + ATP + H(+) = 3'-dephospho-CoA + diphosphate. The protein operates within cofactor biosynthesis; coenzyme A biosynthesis; CoA from (R)-pantothenate: step 4/5. Reversibly transfers an adenylyl group from ATP to 4'-phosphopantetheine, yielding dephospho-CoA (dPCoA) and pyrophosphate. The sequence is that of Phosphopantetheine adenylyltransferase from Clostridium botulinum (strain ATCC 19397 / Type A).